A 154-amino-acid chain; its full sequence is Ribonuclease P protein subunit p21 (154 aa).

Position 2 is an N-acetylalanine (Ala2). Residues Cys62, Cys65, Cys92, and Cys95 each contribute to the Zn(2+) site. The interval 117 to 154 (QLGSQADSKPLQPLPNTAHSISDRLPEEKMQTQGSSNQ) is disordered. Basic and acidic residues predominate over residues 137 to 146 (ISDRLPEEKM).

It belongs to the eukaryotic/archaeal RNase P protein component 4 family. In terms of assembly, RNase P consists of a catalytic RNA moiety and about 10 protein subunits; POP1, POP4, POP5, POP7, RPP14, RPP21, RPP25, RPP30, RPP38 and RPP40. Within the RNase P complex, POP1, POP7 and RPP25 form the 'finger' subcomplex, POP5, RPP14, RPP40 and homodimeric RPP30 form the 'palm' subcomplex, and RPP21, POP4 and RPP38 form the 'wrist' subcomplex. All subunits of the RNase P complex interact with the catalytic RNA.

It is found in the nucleus. Its subcellular location is the nucleolus. Functionally, component of ribonuclease P, a ribonucleoprotein complex that generates mature tRNA molecules by cleaving their 5'-ends. In Homo sapiens (Human), this protein is Ribonuclease P protein subunit p21 (RPP21).